Consider the following 511-residue polypeptide: Protein phosphatase 2C 16 (511 aa).

The signal sequence occupies residues 1–22 (MEEMTPAVAMTLSLAANTMCES). The PPM-type phosphatase domain occupies 189–501 (LWGTVSIQGN…DNISIIVIDL (313 aa)). Mn(2+)-binding residues include Asp-243, Gly-244, Asp-432, and Asp-492.

This sequence belongs to the PP2C family. As to quaternary structure, interacts with SWI3B (via N-terminus). Interacts with ABA-bounded PYR1, PYL1, PYL2, PYL3, PYL4, PYL5, PYL6, PYL8 and PYL9, and with free PYL2, PYL3, PYL4, PYL10 and PYL13. Mg(2+) is required as a cofactor. Requires Mn(2+) as cofactor. Expressed in seeds, roots, stems, leaves and flowers, especially in meristematic tissues, guard cells, embryo and siliques.

The protein resides in the cytoplasm. It is found in the nucleus. The catalysed reaction is O-phospho-L-seryl-[protein] + H2O = L-seryl-[protein] + phosphate. It carries out the reaction O-phospho-L-threonyl-[protein] + H2O = L-threonyl-[protein] + phosphate. Repressed by PYR/PYL/RCAR ABA receptors in an ABA-dependent manner. In terms of biological role, key component and repressor of the abscisic acid (ABA) signaling pathway that regulates numerous ABA responses, such as stomatal closure, seed germination and inhibition of vegetative growth. Confers enhanced sensitivity to drought. The protein is Protein phosphatase 2C 16 (HAB1) of Arabidopsis thaliana (Mouse-ear cress).